The following is a 212-amino-acid chain: Leucine efflux protein (212 aa).

6 helical membrane-spanning segments follow: residues 5–25 (FGVL…LVPG), 49–69 (GVFI…ATLI), 81–101 (YLGA…VLTQ), 122–142 (TLSL…VQFI), 153–173 (FFIL…FLIL), and 188–208 (LAKL…ARLA).

It belongs to the Rht family.

The protein resides in the cell inner membrane. The enzyme catalyses L-leucine(in) + H(+)(out) = L-leucine(out) + H(+)(in). In terms of biological role, exporter of leucine. This is Leucine efflux protein (leuE) from Klebsiella pneumoniae subsp. pneumoniae (strain ATCC 700721 / MGH 78578).